Consider the following 377-residue polypeptide: Outer membrane porin N (377 aa).

The signal sequence occupies residues 1–21; it reads MKSKVLALLIPALLAAGAAHA. Polar residues predominate over residues 175 to 189; that stretch reads NNEGASNGQEGTNNG. The interval 175–196 is disordered; it reads NNEGASNGQEGTNNGRDVRHEN.

The protein belongs to the Gram-negative porin family. As to quaternary structure, homotrimer.

Its subcellular location is the cell outer membrane. Functionally, forms pores that allow passive diffusion of small molecules across the outer membrane. Non-specific porin. This chain is Outer membrane porin N (ompN), found in Escherichia coli (strain K12).